The sequence spans 206 residues: Small ribosomal subunit protein uS3 (206 aa).

The KH type-2 domain maps to 39 to 107; sequence IRSYINESFK…SVEVNVVGIK (69 aa).

Belongs to the universal ribosomal protein uS3 family. In terms of assembly, part of the 30S ribosomal subunit. Forms a tight complex with proteins S10 and S14.

In terms of biological role, binds the lower part of the 30S subunit head. Binds mRNA in the 70S ribosome, positioning it for translation. In Wolbachia sp. subsp. Brugia malayi (strain TRS), this protein is Small ribosomal subunit protein uS3.